The sequence spans 145 residues: MFNLLKPKGASKRRKIVGRGPGSGLGKTSGRGQKGQKARNTSPRLGFEGGQTPLYRRLPRKGFSNNDYKLEYTIVNLGDIDKKFKDGQVVNYDTLLENKLIRKKNKKIKILSNGELTKKVSLEVSKISKSAESLVIRIGGTIKLV.

The disordered stretch occupies residues 1 to 58 (MFNLLKPKGASKRRKIVGRGPGSGLGKTSGRGQKGQKARNTSPRLGFEGGQTPLYRRL). The span at 19 to 33 (RGPGSGLGKTSGRGQ) shows a compositional bias: gly residues.

The protein belongs to the universal ribosomal protein uL15 family. Part of the 50S ribosomal subunit.

Its function is as follows. Binds to the 23S rRNA. The polypeptide is Large ribosomal subunit protein uL15 (Borrelia garinii subsp. bavariensis (strain ATCC BAA-2496 / DSM 23469 / PBi) (Borreliella bavariensis)).